The primary structure comprises 1097 residues: DNA-directed RNA polymerase subunit beta (1097 aa).

The protein belongs to the RNA polymerase beta chain family. In plastids the minimal PEP RNA polymerase catalytic core is composed of four subunits: alpha, beta, beta', and beta''. When a (nuclear-encoded) sigma factor is associated with the core the holoenzyme is formed, which can initiate transcription.

The protein localises to the plastid. It localises to the chloroplast. The enzyme catalyses RNA(n) + a ribonucleoside 5'-triphosphate = RNA(n+1) + diphosphate. In terms of biological role, DNA-dependent RNA polymerase catalyzes the transcription of DNA into RNA using the four ribonucleoside triphosphates as substrates. The polypeptide is DNA-directed RNA polymerase subunit beta (Rhodomonas salina (Cryptomonas salina)).